Reading from the N-terminus, the 443-residue chain is Delta(6)-fatty-acid desaturase fat-3 (443 aa).

The Cytochrome b5 heme-binding domain occupies 1-71; that stretch reads MVVDKNASGL…DLLKKHGEHD (71 aa). 3 consecutive transmembrane segments (helical) span residues 136–156, 296–316, and 318–338; these read IMAF…ACLL, TIVG…TWPL, and VAYF…VVTF.

This sequence belongs to the fatty acid desaturase type 1 family.

It localises to the membrane. It catalyses the reaction (9Z,12Z)-octadecadienoyl-CoA + 2 Fe(II)-[cytochrome b5] + O2 + 2 H(+) = (6Z,9Z,12Z)-octadecatrienoyl-CoA + 2 Fe(III)-[cytochrome b5] + 2 H2O. It carries out the reaction (9Z,12Z,15Z)-octadecatrienoyl-CoA + 2 Fe(II)-[cytochrome b5] + O2 + 2 H(+) = (6Z,9Z,12Z,15Z)-octadecatetraenoyl-CoA + 2 Fe(III)-[cytochrome b5] + 2 H2O. The protein operates within lipid metabolism; polyunsaturated fatty acid biosynthesis. In terms of biological role, can function as a Delta(6) fatty acid desaturase. Introduces a double bond in the fatty acid chain 6 carbons away from carboxy terminal to biosynthesize polyunsaturated fatty acids (PUFAs) endogenously (PUFAs are essential for membrane structure and many cellular and physiological processes). Acts on a variety of substrates such as linoleoyl-CoA ((9Z,12Z)-octadecadienoyl-CoA, C18:2n-6) and alpha-linolenoyl-CoA ((9Z,12Z,15Z)-octadecatrienoyl-CoA, C18:3n-3) to produce gamma-linolenoyl-CoA ((6Z,9Z,12Z)-octadecatrienoyl-CoA, C18:3n-6) and (6Z,9Z,12Z,15Z)-octadecatetraenoyl-CoA (18:4n-3) respectively. Unlike plants, Caenorhabditis elegans desaturases seem to use fatty acyl-CoAs as substrates. Plays a role in synaptic vesicle recycling by regulating synaptojanin unc-26 localization at synapses. This is Delta(6)-fatty-acid desaturase fat-3 (fat-3) from Caenorhabditis elegans.